A 136-amino-acid polypeptide reads, in one-letter code: General odorant-binding protein 57e (136 aa).

The signal sequence occupies residues 1–20 (MLDQLTLCLLLNFLCANVLA). 3 disulfide bridges follow: Cys28/Cys61, Cys57/Cys109, and Cys98/Cys118.

Belongs to the PBP/GOBP family.

Its function is as follows. Present in the aqueous fluid surrounding olfactory sensory dendrites and are thought to aid in the capture and transport of hydrophobic odorants into and through this fluid. The chain is General odorant-binding protein 57e from Drosophila melanogaster (Fruit fly).